The following is a 522-amino-acid chain: Major facilitator-type transporter sorT (522 aa).

The interval 1-21 is disordered; sequence MSHTEPKAPVNTGEVENGHLY. Transmembrane regions (helical) follow at residues 52 to 72, 89 to 109, 121 to 141, 143 to 163, 183 to 203, 211 to 231, 280 to 300, 324 to 344, 366 to 386, 395 to 415, 427 to 447, and 457 to 477; these read WFIAAIATLSVFAVTFTSSAY, VFIVGLSLFVLGFAIGPAVWA, QILWIITHIAMVAFLGGSAGS, NVATLLILRFFAGTFGGSPLV, TIYCVAPFLGPILGPIVGGFV, WVQGVCVIFIGVVGILGIVFI, WIFLFLEPIVLIASVYMAIIY, IGGLAFLGIAVGIIFGLVYAI, LPPAIVGGVALPIGMFAFAWT, VSIILSAPFGFGCVLVILPIM, ASVLAAAAIFRSVVGAVFPLF, and IHWASSIPAFLTLLCMPFPLI.

The protein belongs to the major facilitator superfamily. Sugar transporter (TC 2.A.1.1) family.

It localises to the membrane. Functionally, major facilitator-type transporter; part of the gene cluster that mediates the biosynthesis of sorbicillinoids, a diverse group of yellow secondary metabolites that restrict growth of competing pathogenic fungi but not of bacteria. The protein is Major facilitator-type transporter sorT of Penicillium rubens (strain ATCC 28089 / DSM 1075 / NRRL 1951 / Wisconsin 54-1255) (Penicillium chrysogenum).